The following is a 419-amino-acid chain: Aminoacyltransferase FemB (419 aa).

This sequence belongs to the FemABX family. As to quaternary structure, homodimer. Interacts with FemA.

Its subcellular location is the cytoplasm. The catalysed reaction is MurNAc-L-Ala-D-isoglutaminyl-L-Lys-(N(6)-tri-Gly)-D-Ala-D-Ala-diphospho-di-trans,octa-cis-undecaprenyl-GlcNAc + 2 glycyl-tRNA(Gly) = MurNAc-L-Ala-D-isoglutaminyl-L-Lys-(N(6)-penta-Gly)-D-Ala-D-Ala-diphospho-di-trans,octa-cis-undecaprenyl-GlcNAc + 2 tRNA(Gly) + 2 H(+). Functionally, catalyzes the formation of the pentaglycine interpeptide bridge, which is characteristic of the S.aureus peptidoglycan. Adds glycines 4 and 5 of the pentaglycine bridge, using glycyl-tRNA(Gly) as donor. Involved in resistance to methicillin. The sequence is that of Aminoacyltransferase FemB (femB) from Staphylococcus aureus (strain NCTC 8325 / PS 47).